The primary structure comprises 1671 residues: Kinesin-like protein unc-104 (1671 aa).

Residues 3-351 (SVKVAVRVRP…LRYADRAKQI (349 aa)) form the Kinesin motor domain. Position 97–104 (97–104 (GQTGAGKS)) interacts with ATP. Residues 358 to 437 (NEDANAKLIR…IAELNETWEE (80 aa)) are a coiled coil. A disordered region spans residues 391–413 (DELNKSTTGIKSPSKSRNRNGST). Over residues 395-413 (KSTTGIKSPSKSRNRNGST) the composition is skewed to polar residues. The FHA domain maps to 500–566 (TRLGTHEANV…LKTGSRVILG (67 aa)). Positions 577-674 (EQARELREKI…EEQSMTMSMY (98 aa)) form a coiled coil. The segment at 949–973 (DVDSGRGIDSNSASDCPENAEEPGE) is disordered. The 99-residue stretch at 1538–1636 (VVARKGLLNV…WLYAINPLLA (99 aa)) folds into the PH domain.

The protein belongs to the TRAFAC class myosin-kinesin ATPase superfamily. Kinesin family. Unc-104 subfamily. In terms of assembly, monomer.

It localises to the cytoplasm. It is found in the cytoskeleton. Functionally, required for presynaptic maturation, has a role in axonal transport of dense-core vesicles carrying synaptic vesicle precursors, components required for the morphological transformation of axonal growth cones to mature boutons. This chain is Kinesin-like protein unc-104, found in Drosophila pseudoobscura pseudoobscura (Fruit fly).